Here is a 256-residue protein sequence, read N- to C-terminus: MLTYPNINPIAFSLGPLKVHWYGLMYLIGFIGAWLLGYWRIKHYKLNWNNDQLSDLIFYSALGVILGGRVGYMLFYDIQEFIHHPWVLFKIWEGGMSFHGGLLGVVIAAWLFCRKYGKTFLEVGDFVAPLVPLGLAAGRLGNFINGELWGRVTDVPWGMIYPHVDDQPRHPSQLYEFGLEGVALFILIWCYASKPRQQGRVCALFLMGYAICRLIAESFRQPDSQLGFVAFGWLTMGQVLSIPMLLIGIWLWWAKR.

Transmembrane regions (helical) follow at residues Val-19–Trp-39, Leu-56–Tyr-76, and Ile-91–Leu-111. Arg-139 serves as a coordination point for a 1,2-diacyl-sn-glycero-3-phospho-(1'-sn-glycerol). The chain crosses the membrane as a helical span at residues Phe-231 to Leu-251.

Belongs to the Lgt family.

The protein resides in the cell inner membrane. The catalysed reaction is L-cysteinyl-[prolipoprotein] + a 1,2-diacyl-sn-glycero-3-phospho-(1'-sn-glycerol) = an S-1,2-diacyl-sn-glyceryl-L-cysteinyl-[prolipoprotein] + sn-glycerol 1-phosphate + H(+). The protein operates within protein modification; lipoprotein biosynthesis (diacylglyceryl transfer). In terms of biological role, catalyzes the transfer of the diacylglyceryl group from phosphatidylglycerol to the sulfhydryl group of the N-terminal cysteine of a prolipoprotein, the first step in the formation of mature lipoproteins. In Legionella pneumophila (strain Paris), this protein is Phosphatidylglycerol--prolipoprotein diacylglyceryl transferase.